The primary structure comprises 285 residues: MLYLVGLGLADETDITVKGLEVVKRAERVYLEAYTSILLVSKEKLEAFYGRPVIEADRELVETGSDEILAGADKADVAFLVVGDPFGATTHTDLVLRAREMGIESKVIPNASIMSGIGCTGLQLYNFGQTVSMVFFTENWKPTSYYDRVKENVQLGLHTLVLLDIKVKEQSYENMARGRRIFEPPRYMTVAQCASQMLETEEERKEGVFGPDSLAVGAARVGGPDQKLVVGTLKELSEVDMGPPLHSLVLLGRKAHDLERLYIREFAVDKATFDASWNKGYGATS.

S-adenosyl-L-methionine is bound by residues Leu-9, Asp-84, Gly-87, 112-113 (SI), Leu-163, Val-221, and His-246.

Belongs to the diphthine synthase family.

It localises to the cytoplasm. The catalysed reaction is 2-[(3S)-amino-3-carboxypropyl]-L-histidyl-[translation elongation factor 2] + 4 S-adenosyl-L-methionine = diphthine methyl ester-[translation elongation factor 2] + 4 S-adenosyl-L-homocysteine + 3 H(+). Its pathway is protein modification; peptidyl-diphthamide biosynthesis. S-adenosyl-L-methionine-dependent methyltransferase that catalyzes four methylations of the modified target histidine residue in translation elongation factor 2 (EF-2), to form an intermediate called diphthine methyl ester. The four successive methylation reactions represent the second step of diphthamide biosynthesis. This chain is Diphthine methyl ester synthase (dph5), found in Aspergillus fumigatus (strain ATCC MYA-4609 / CBS 101355 / FGSC A1100 / Af293) (Neosartorya fumigata).